The following is a 618-amino-acid chain: Acetolactate synthase (618 aa).

The tract at residues 1-30 (MSAPTKPHSPTFKPEPHSAANEPKHPAARP) is disordered. Thiamine diphosphate is bound at residue glutamate 85. Residues arginine 187, 293 to 314 (HGTVAAVAALQRSDLLIALGTR), and 336 to 355 (DIDPAEIGKNRHADVPIVGD) each bind FAD. Positions 429–509 (QHQMWAAQFI…VKVALINNGN (81 aa)) are thiamine pyrophosphate binding. Positions 480 and 507 each coordinate Mg(2+).

The protein belongs to the TPP enzyme family. The cofactor is Mg(2+). Requires thiamine diphosphate as cofactor.

The enzyme catalyses 2 pyruvate + H(+) = (2S)-2-acetolactate + CO2. It participates in amino-acid biosynthesis; L-isoleucine biosynthesis; L-isoleucine from 2-oxobutanoate: step 1/4. Its pathway is amino-acid biosynthesis; L-valine biosynthesis; L-valine from pyruvate: step 1/4. The chain is Acetolactate synthase (ilvB) from Mycobacterium bovis (strain ATCC BAA-935 / AF2122/97).